The chain runs to 444 residues: ATP-dependent protease ATPase subunit HslU (444 aa).

Residues I18 and 60 to 65 (GVGKTE) each bind ATP. Residues 141–161 (DAWGNNEEGDNDSGTRQSFRK) are disordered. Residues D257, E322, and R394 each coordinate ATP.

Belongs to the ClpX chaperone family. HslU subfamily. As to quaternary structure, a double ring-shaped homohexamer of HslV is capped on each side by a ring-shaped HslU homohexamer. The assembly of the HslU/HslV complex is dependent on binding of ATP.

The protein localises to the cytoplasm. Its function is as follows. ATPase subunit of a proteasome-like degradation complex; this subunit has chaperone activity. The binding of ATP and its subsequent hydrolysis by HslU are essential for unfolding of protein substrates subsequently hydrolyzed by HslV. HslU recognizes the N-terminal part of its protein substrates and unfolds these before they are guided to HslV for hydrolysis. The chain is ATP-dependent protease ATPase subunit HslU from Aliivibrio fischeri (strain MJ11) (Vibrio fischeri).